Consider the following 587-residue polypeptide: Pyruvate decarboxylase 3 (587 aa).

Positions 48 and 135 each coordinate substrate. Positions 415-496 are thiamine pyrophosphate binding; sequence DSWFNCQKLR…FLINNGGYTI (82 aa). Mg(2+) is bound by residues D464, N491, and G493. E497 is a substrate binding site.

This sequence belongs to the TPP enzyme family. Homotetramer. A metal cation serves as cofactor. Thiamine diphosphate is required as a cofactor.

The enzyme catalyses a 2-oxocarboxylate + H(+) = an aldehyde + CO2. The sequence is that of Pyruvate decarboxylase 3 (PDC3) from Oryza sativa subsp. japonica (Rice).